We begin with the raw amino-acid sequence, 205 residues long: Large ribosomal subunit protein uL3 (205 aa).

It belongs to the universal ribosomal protein uL3 family. Part of the 50S ribosomal subunit. Forms a cluster with proteins L14 and L19.

Functionally, one of the primary rRNA binding proteins, it binds directly near the 3'-end of the 23S rRNA, where it nucleates assembly of the 50S subunit. This is Large ribosomal subunit protein uL3 from Thermosipho melanesiensis (strain DSM 12029 / CIP 104789 / BI429).